The sequence spans 275 residues: MNALTPLSARLERSDGHALVTLARSRGAVRLRDLAQRGSAKAFLPRVEGDVPEVVFLNTSGGLTGGDRLSYRLEVGEGCRATATTQTAERAYAAGAGAARVEVLHEVGRDGWLDWLPQETILFEGAALERETQISLAPGAGCLMVESVVLGRAAMGETLSRLAFRDRRSILRGGKPVVVEPLALDDRALAAAGGAAMLGGARALATLAMVGPGAEDALGPARAALGEAGVEAAASAFDGKLVLRLLAADGWPLRRQVARLLTVLRGRALPRVWQV.

The protein belongs to the UreD family. UreD, UreF and UreG form a complex that acts as a GTP-hydrolysis-dependent molecular chaperone, activating the urease apoprotein by helping to assemble the nickel containing metallocenter of UreC. The UreE protein probably delivers the nickel.

The protein localises to the cytoplasm. In terms of biological role, required for maturation of urease via the functional incorporation of the urease nickel metallocenter. This is Urease accessory protein UreD from Cereibacter sphaeroides (strain ATCC 17023 / DSM 158 / JCM 6121 / CCUG 31486 / LMG 2827 / NBRC 12203 / NCIMB 8253 / ATH 2.4.1.) (Rhodobacter sphaeroides).